The primary structure comprises 493 residues: Cysteine--tRNA ligase (493 aa).

Cys41 lines the Zn(2+) pocket. A 'HIGH' region motif is present at residues Pro43–Asn53. Cys231, His256, and Glu260 together coordinate Zn(2+). The 'KMSKS' region signature appears at Lys296–Ser300. Residue Lys299 participates in ATP binding.

Belongs to the class-I aminoacyl-tRNA synthetase family. In terms of assembly, monomer. Zn(2+) is required as a cofactor.

The protein resides in the cytoplasm. It catalyses the reaction tRNA(Cys) + L-cysteine + ATP = L-cysteinyl-tRNA(Cys) + AMP + diphosphate. In Novosphingobium aromaticivorans (strain ATCC 700278 / DSM 12444 / CCUG 56034 / CIP 105152 / NBRC 16084 / F199), this protein is Cysteine--tRNA ligase.